Consider the following 549-residue polypeptide: RPARSHAKSARSVAETMGNYHPHGDASIYDTLVRMAQPWSLRYPLVDGQGNFGSPGNVPPAAMRYCVTGDALVRLPFGQSMRIADVVPGARPNSDNAVELKVLDRHGNPVAADRLFHSGDHQTYMVRTAEGYEVTGTANHPLLCLVDVGGVPTLLWKLIEEIHPDDYVALQRTPPMELGPADWHDTMEALLLGAFISEGCVSETRAGFANLDRDYFTMVARAYDAVVGDKRDVYQQTIASGSLQHTLYTQNVTALKQSRLWQILGMRSADTYVPEWMWHSPAAVKRVFLQALFEGDGSCSRRPHNTIQISYNTVSKQLAMDVQQMLLEFGVISRRYLHAAGEYKVVITDRAQAELFPKQIGFGGAKQTELSKILAAMPPCAGRDSDHVPGLARFIRRHCDSRWVDKEWLHKHNIDHLSRWRRDGAEILSHIADPDVRTIATDLTDGRFYYARVASVTDTGVQPVYSLRVDTDDHAFLTNGFVSHNTEARLTPLAMEMLREIDEETVDFIPNYDGRVQEPTVLPSRFPNLLANGSGGIAVGMATNIPPHN.

Residues 1-549 (RPARSHAKSA…GMATNIPPHN (549 aa)) form the Topo IIA-type catalytic domain. The O-(5'-phospho-DNA)-tyrosine intermediate role is filled by tyrosine 65. Residues 191-331 (LLGAFISEGC…VQQMLLEFGV (141 aa)) form the DOD-type homing endonuclease domain.

The protein belongs to the type II topoisomerase GyrA/ParC subunit family. Heterotetramer, composed of two GyrA and two GyrB chains. In the heterotetramer, GyrA contains the active site tyrosine that forms a transient covalent intermediate with DNA, while GyrB binds cofactors and catalyzes ATP hydrolysis. In terms of processing, this protein undergoes a protein self splicing that involves a post-translational excision of the intervening region (intein) followed by peptide ligation.

Its subcellular location is the cytoplasm. It catalyses the reaction ATP-dependent breakage, passage and rejoining of double-stranded DNA.. In terms of biological role, a type II topoisomerase that negatively supercoils closed circular double-stranded (ds) DNA in an ATP-dependent manner to modulate DNA topology and maintain chromosomes in an underwound state. Negative supercoiling favors strand separation, and DNA replication, transcription, recombination and repair, all of which involve strand separation. Also able to catalyze the interconversion of other topological isomers of dsDNA rings, including catenanes and knotted rings. Type II topoisomerases break and join 2 DNA strands simultaneously in an ATP-dependent manner. The sequence is that of DNA gyrase subunit A (gyrA) from Mycobacterium kansasii.